Here is a 147-residue protein sequence, read N- to C-terminus: MAAYTEDQLAEFQEAFNLFDNRGDGKIQLSQVGECLRALGQNPTESDVKKCTHQLKPDERISFEVFLPIYQAISKARSGDTADDFIEGLRHFDKDASGYISSAELRHLLTTLGEKLTDEEVEQLLANMEDQQGNINYEEFVRMVMSG.

3 consecutive EF-hand domains span residues 7–42 (DQLA…LGQN), 80–115 (DTAD…LGEK), and 115–147 (KLTD…VMSG). S30 is modified (phosphoserine). Positions 93, 95, 97, 99, and 104 each coordinate Ca(2+).

Myosin is a hexamer of 2 heavy chains and 4 light chains.

In Drosophila melanogaster (Fruit fly), this protein is Myosin-2 essential light chain (Mlc-c).